The following is a 95-amino-acid chain: Small ribosomal subunit protein uS19 (95 aa).

The protein belongs to the universal ribosomal protein uS19 family.

In terms of biological role, protein S19 forms a complex with S13 that binds strongly to the 16S ribosomal RNA. The chain is Small ribosomal subunit protein uS19 from Thermosipho africanus (strain TCF52B).